The primary structure comprises 463 residues: Glutamate--tRNA ligase (463 aa).

A 'HIGH' region motif is present at residues 10–20 (PSPTGYLHIGG). Residues 252 to 256 (KLSKR) carry the 'KMSKS' region motif. An ATP-binding site is contributed by K255.

This sequence belongs to the class-I aminoacyl-tRNA synthetase family. Glutamate--tRNA ligase type 1 subfamily. Monomer.

The protein resides in the cytoplasm. It carries out the reaction tRNA(Glu) + L-glutamate + ATP = L-glutamyl-tRNA(Glu) + AMP + diphosphate. In terms of biological role, catalyzes the attachment of glutamate to tRNA(Glu) in a two-step reaction: glutamate is first activated by ATP to form Glu-AMP and then transferred to the acceptor end of tRNA(Glu). The protein is Glutamate--tRNA ligase of Mycoplasmopsis agalactiae (strain NCTC 10123 / CIP 59.7 / PG2) (Mycoplasma agalactiae).